Consider the following 1037-residue polypeptide: Ribonuclease E (1037 aa).

3 disordered regions span residues 1 to 23 (MAED…LPER), 47 to 90 (FDGR…ETPV), and 106 to 369 (VSEA…PILS). Over residues 47–67 (FDGRQRSAHSTVDKADAERVR) the composition is skewed to basic and acidic residues. 2 stretches are compositionally biased toward low complexity: residues 68 to 90 (AALT…ETPV) and 106 to 126 (VSEA…PAAE). Composition is skewed to acidic residues over residues 127–141 (AEAE…EAET) and 196–226 (VVDD…DDDQ). Over residues 230 to 242 (PRRRRRGRRGRGR) the composition is skewed to basic residues. Acidic residues predominate over residues 248–284 (NDDATSDADTDSTEDQTDGDEQESGEDSDDSGDEDST). Positions 291–301 (RRRRRRRRRKS) are enriched in basic residues. Positions 320-335 (VHERAPRTERSDKSDD) are enriched in basic and acidic residues. In terms of domain architecture, S1 motif spans 427 to 504 (GNIYLGIVQN…GHKGARLTTQ (78 aa)). Residues 561-589 (EDIRSDVERLQKRWSEIEAKAAEVTEKKA) are a coiled coil. Mg(2+)-binding residues include Asp694 and Asp738. The Zn(2+) site is built by Cys796 and Cys799. The interval 810 to 1037 (PIDSASSNGG…ARPAGPPSHD (228 aa)) is disordered. The segment covering 834–843 (RRGKRGKKGA) has biased composition (basic residues). Basic and acidic residues predominate over residues 844 to 864 (ARTEEVHVAKVPDHTPGEHPM). A compositionally biased stretch (acidic residues) spans 879–891 (EDHEDHEDHETAE). Residues 897–913 (EVRDDTRDEHDADERAH) show a composition bias toward basic and acidic residues. Acidic residues predominate over residues 923-1006 (GDEDLDDSDE…DSDSDEDEEP (84 aa)).

Belongs to the RNase E/G family. In terms of assembly, assembles into a homotetramer formed by a dimer of dimers. Interacts with DNA-binding protein HhupB. Mg(2+) is required as a cofactor. Requires Zn(2+) as cofactor.

It localises to the cytoplasm. The catalysed reaction is Endonucleolytic cleavage of single-stranded RNA in A- and U-rich regions.. Functionally, endoribonuclease that plays a central role in RNA processing and decay. Plays a major role in pre-16S rRNA maturation, probably generating the mature 5'-end, and a minor role in pre-5S and pre-23S rRNA maturation. Probably also processes tRNA. RNase E and HupB jointly contribute to cellular adaptation to changing growth conditions and survival during antibiotic treatment. Overexpression or depletion leads to changes in gene expression; overexpression induces metabolic slowdown and cell stress while depleted strains grow less well than induced strains. In Mycolicibacterium smegmatis (strain ATCC 700084 / mc(2)155) (Mycobacterium smegmatis), this protein is Ribonuclease E (rne).